The primary structure comprises 33 residues: DELTA-pseudomyrmecitoxin-Pp1a subunit B (33 aa).

In terms of assembly, heterodimer composed of subunit A and subunit B (DELTA-PSDTX-Pp1a); disulfide-linked. As to expression, expressed by the venom gland.

The protein resides in the secreted. Functionally, this heterodimer has insecticidal and cytotoxic properties. Induces immediate paralysis when injected into blowflies (Lucilia cuprina), and then death within 24 hours. Also inhibits the growth of Aedes albopictus mosquito C6/36 cells. The sequence is that of DELTA-pseudomyrmecitoxin-Pp1a subunit B from Pseudomyrmex penetrator (Ant).